We begin with the raw amino-acid sequence, 153 residues long: Transcriptional repressor NrdR (153 aa).

The segment at 3–34 (CPSCFHNGTRVLDSRPVDEGRSIRRRRECESC) is a zinc-finger region. In terms of domain architecture, ATP-cone spans 49–139 (LIVVKKEGTR…VYRQFKDLNV (91 aa)).

The protein belongs to the NrdR family. It depends on Zn(2+) as a cofactor.

In terms of biological role, negatively regulates transcription of bacterial ribonucleotide reductase nrd genes and operons by binding to NrdR-boxes. The sequence is that of Transcriptional repressor NrdR from Bacillus mycoides (strain KBAB4) (Bacillus weihenstephanensis).